A 438-amino-acid polypeptide reads, in one-letter code: Serine--tRNA ligase (438 aa).

Position 235–237 (235–237 (TAE)) interacts with L-serine. ATP is bound by residues 266–268 (RKE) and Val-282. Position 289 (Glu-289) interacts with L-serine. 355–358 (ELVS) contributes to the ATP binding site. Residue Thr-393 participates in L-serine binding.

It belongs to the class-II aminoacyl-tRNA synthetase family. Type-1 seryl-tRNA synthetase subfamily. In terms of assembly, homodimer. The tRNA molecule binds across the dimer.

The catalysed reaction is tRNA(Ser) + L-serine + ATP = L-seryl-tRNA(Ser) + AMP + diphosphate + H(+). It carries out the reaction tRNA(Sec) + L-serine + ATP = L-seryl-tRNA(Sec) + AMP + diphosphate + H(+). The protein operates within aminoacyl-tRNA biosynthesis; selenocysteinyl-tRNA(Sec) biosynthesis; L-seryl-tRNA(Sec) from L-serine and tRNA(Sec): step 1/1. Its function is as follows. Catalyzes the attachment of serine to tRNA(Ser). Is also able to aminoacylate tRNA(Sec) with serine, to form the misacylated tRNA L-seryl-tRNA(Sec), which will be further converted into selenocysteinyl-tRNA(Sec). The chain is Serine--tRNA ligase from Helianthus annuus (Common sunflower).